The following is a 335-amino-acid chain: Glyoxylate reductase (335 aa).

NADP(+) contacts are provided by residues 159-162, 181-183, and 240-242; these read MGRI, SRS, and TGR. Residues Arg242 and Glu271 contribute to the active site. The active-site Proton donor is His290. 290 to 292 is an NADP(+) binding site; the sequence is HAA.

It belongs to the D-isomer specific 2-hydroxyacid dehydrogenase family. GyaR subfamily. Homodimer.

The protein localises to the cytoplasm. It catalyses the reaction glycolate + NAD(+) = glyoxylate + NADH + H(+). This is Glyoxylate reductase from Aeropyrum pernix (strain ATCC 700893 / DSM 11879 / JCM 9820 / NBRC 100138 / K1).